The primary structure comprises 151 residues: Viral interleukin-17 (151 aa).

Positions 1–22 (MTFRKTSLVLLLLLSIDCIVKS) are cleaved as a signal peptide. 3 N-linked (GlcNAc...) asparagine; by host glycosylation sites follow: Asn-36, Asn-53, and Asn-64. 2 disulfides stabilise this stretch: Cys-90–Cys-140 and Cys-95–Cys-142.

It belongs to the IL-17 family.

The protein localises to the secreted. This is Viral interleukin-17 (13) from Saimiri sciureus (Common squirrel monkey).